The sequence spans 226 residues: Agamous-like MADS-box protein AP3 (226 aa).

The MADS-box domain maps to 1 to 61 (MARGKIEIKR…GKLHEYISPS (61 aa)). The K-box domain occupies 84–174 (YERMQENLKK…LHEFDARDRD (91 aa)).

As to expression, expressed during flower development in stamens and petals.

The protein localises to the nucleus. Its function is as follows. Probable transcription factor involved in flower development. The polypeptide is Agamous-like MADS-box protein AP3 (Vitis vinifera (Grape)).